The chain runs to 88 residues: Large ribosomal subunit protein eL34 (88 aa).

Residues R41–C72 are disordered.

This sequence belongs to the eukaryotic ribosomal protein eL34 family.

The chain is Large ribosomal subunit protein eL34 from Thermococcus sibiricus (strain DSM 12597 / MM 739).